The chain runs to 315 residues: Protein sprouty homolog 2 (315 aa).

The span at 1–14 (MEARAQSGSGSQPL) shows a compositional bias: polar residues. Disordered stretches follow at residues 1-38 (MEAR…PQQV) and 51-140 (NTNE…GSSF). A compositionally biased stretch (basic and acidic residues) spans 20–32 (DSGRQRGEPDPRD). The segment covering 88–100 (PRQPSRPQHPPAH) has biased composition (pro residues). Low complexity predominate over residues 109–140 (RSISTVSSGSRSSTRTSTSSSSSEQRLLGSSF). A required for interaction with CAV1 region spans residues 118-315 (SRSSTRTSTS…VPPRNFEKPT (198 aa)). Positions 177–291 (KCEDCGKCKC…CYDRVNRPGC (115 aa)) constitute an SPR domain. The segment at 178 to 315 (CEDCGKCKCK…VPPRNFEKPT (138 aa)) is required for interaction with TESK1.

This sequence belongs to the sprouty family. Forms heterodimers with SPRY1. Forms a tripartite complex containing GAB1, METTL13 and SPRY2. Within the complex interacts with METTL13. Interacts with RAF1. Interacts (via C-terminus) with TESK1 (via C-terminus); the interaction disrupts SPRY2 interaction with GRB2, potentially via disruption of SPRY2 serine dephosphorylation. Interacts with PPP2R1A/PP2A-A and PPP2CA/PP2A-C; the interaction with PPP2CA/PP2A-C is inhibited by interaction with TESK1, possibly by vesicular sequestration of SPRY2. Inhibition of the interaction with the serine/threonine-protein phosphatase 2A (PP2A) holoenzyme results in loss of PP2A-mediated dephosphorylation, resulting in the loss of SPRY2 interaction with GRB2. Interacts with GRB2. Interacts with CBL/C-CBL; the interaction inhibits CBL-mediated ubiquitination of EGFR. Interacts (via C-terminus) with CAV1 (via C-terminus). Cleaved at Pro-144 by the prolyl endopeptidase FAP (seprase) activity (in vitro).

The protein resides in the cytoplasm. The protein localises to the cytoskeleton. Its subcellular location is the cell projection. It is found in the ruffle membrane. Antagonist of fibroblast growth factor (FGF) pathways via inhibition of FGF-mediated phosphorylation of ERK1/2. Thereby acts as an antagonist of FGF-induced retinal lens fiber differentiation, may inhibit limb bud outgrowth and may negatively modulate respiratory organogenesis. Inhibits TGFB-induced epithelial-to-mesenchymal transition in retinal lens epithelial cells. Inhibits CBL/C-CBL-mediated EGFR ubiquitination. The chain is Protein sprouty homolog 2 (SPRY2) from Bos taurus (Bovine).